Here is a 397-residue protein sequence, read N- to C-terminus: S-adenosylmethionine synthase (397 aa).

Histidine 17 provides a ligand contact to ATP. A Mg(2+)-binding site is contributed by aspartate 19. Glutamate 45 serves as a coordination point for K(+). L-methionine contacts are provided by glutamate 58 and glutamine 101. The interval 101 to 111 (QSPDIAQGVDK) is flexible loop. ATP contacts are provided by residues 176 to 178 (DGK), 243 to 244 (RF), aspartate 252, 258 to 259 (RK), and lysine 279. Residue aspartate 252 participates in L-methionine binding. Position 283 (lysine 283) interacts with L-methionine.

It belongs to the AdoMet synthase family. Homotetramer; dimer of dimers. It depends on Mg(2+) as a cofactor. K(+) is required as a cofactor.

The protein resides in the cytoplasm. The enzyme catalyses L-methionine + ATP + H2O = S-adenosyl-L-methionine + phosphate + diphosphate. Its pathway is amino-acid biosynthesis; S-adenosyl-L-methionine biosynthesis; S-adenosyl-L-methionine from L-methionine: step 1/1. Catalyzes the formation of S-adenosylmethionine (AdoMet) from methionine and ATP. The overall synthetic reaction is composed of two sequential steps, AdoMet formation and the subsequent tripolyphosphate hydrolysis which occurs prior to release of AdoMet from the enzyme. In Staphylococcus aureus (strain USA300), this protein is S-adenosylmethionine synthase.